Here is a 445-residue protein sequence, read N- to C-terminus: Probable D-serine dehydratase (445 aa).

K111 carries the post-translational modification N6-(pyridoxal phosphate)lysine.

This sequence belongs to the serine/threonine dehydratase family. DsdA subfamily. Pyridoxal 5'-phosphate serves as cofactor.

It catalyses the reaction D-serine = pyruvate + NH4(+). The sequence is that of Probable D-serine dehydratase from Burkholderia pseudomallei (strain K96243).